Here is a 39-residue protein sequence, read N- to C-terminus: Photosystem II reaction center protein I (39 aa).

A helical transmembrane segment spans residues 6 to 26 (ISVYSVVFFFIGIFMFGFLAS).

Belongs to the PsbI family. As to quaternary structure, PSII is composed of 1 copy each of membrane proteins PsbA, PsbB, PsbC, PsbD, PsbE, PsbF, PsbH, PsbI, PsbJ, PsbK, PsbL, PsbM, PsbT, PsbX, PsbY, PsbZ, Psb30/Ycf12, peripheral proteins PsbO, CyanoQ (PsbQ), PsbU, PsbV and a large number of cofactors. It forms dimeric complexes.

The protein localises to the cellular thylakoid membrane. Functionally, one of the components of the core complex of photosystem II (PSII), required for its stability and/or assembly. PSII is a light-driven water:plastoquinone oxidoreductase that uses light energy to abstract electrons from H(2)O, generating O(2) and a proton gradient subsequently used for ATP formation. It consists of a core antenna complex that captures photons, and an electron transfer chain that converts photonic excitation into a charge separation. The sequence is that of Photosystem II reaction center protein I from Synechococcus sp. (strain RCC307).